A 258-amino-acid polypeptide reads, in one-letter code: Phosphoribosylformylglycinamidine synthase subunit PurQ (258 aa).

The region spanning 7-238 (IGILLMEGTN…QAMYLETEKD (232 aa)) is the Glutamine amidotransferase type-1 domain. Catalysis depends on cysteine 97, which acts as the Nucleophile. Catalysis depends on residues histidine 220 and glutamate 222.

Part of the FGAM synthase complex composed of 1 PurL, 1 PurQ and 2 PurS subunits.

It localises to the cytoplasm. The enzyme catalyses N(2)-formyl-N(1)-(5-phospho-beta-D-ribosyl)glycinamide + L-glutamine + ATP + H2O = 2-formamido-N(1)-(5-O-phospho-beta-D-ribosyl)acetamidine + L-glutamate + ADP + phosphate + H(+). It catalyses the reaction L-glutamine + H2O = L-glutamate + NH4(+). The protein operates within purine metabolism; IMP biosynthesis via de novo pathway; 5-amino-1-(5-phospho-D-ribosyl)imidazole from N(2)-formyl-N(1)-(5-phospho-D-ribosyl)glycinamide: step 1/2. Its function is as follows. Part of the phosphoribosylformylglycinamidine synthase complex involved in the purines biosynthetic pathway. Catalyzes the ATP-dependent conversion of formylglycinamide ribonucleotide (FGAR) and glutamine to yield formylglycinamidine ribonucleotide (FGAM) and glutamate. The FGAM synthase complex is composed of three subunits. PurQ produces an ammonia molecule by converting glutamine to glutamate. PurL transfers the ammonia molecule to FGAR to form FGAM in an ATP-dependent manner. PurS interacts with PurQ and PurL and is thought to assist in the transfer of the ammonia molecule from PurQ to PurL. The polypeptide is Phosphoribosylformylglycinamidine synthase subunit PurQ (Thermoplasma volcanium (strain ATCC 51530 / DSM 4299 / JCM 9571 / NBRC 15438 / GSS1)).